Reading from the N-terminus, the 641-residue chain is MTRTTVEPIKYEAPSWEHKSVHVSDDHRRIIPNVGDDATRPKGRIRRSMTACNTCRKLKTRCDLDPRGHACRRCLSLRIDCQLPETSERFQDSTPMWSDATTAIPSIEERLTSLERSMREMTGMLRQILNQSPSVSNISVPPLARSVHTEETASIEGNSFGPFLPKPVRLIQDLQSEFFGETNRIPVESPFLGNSFEKGILDSKLSLKLVQLFVDNFGPLVSINNQSDFHNEMRNTDSLLYSTACLLASRYVPGIPPPIVHTMNLQVRHKAVNLLWEKPPLKYESLQALALLCLWPAAGQKEFPIDGWLLSGTAINHALVSFDFLNHVPSELLIDNDIAAQLRLWNAFCLTQLHFAVGNARPFHLPQRYLDYCPRLLEHPAATVEDGKVVAEIQLYLITLRLQANEQRMRFAEVEYEEIERWKVEWAHLLGKVKQRGPSRINANYSTAGDENSTFELSLWFCQILLHRTAMRFQAESERLTSEILQGSRLIISKFLQLRFVTALRVVDQAYFIVGYAALNLCDFNFLDPLIDQIQMFLLHLSPNEDHIAYRFSCMIAEFKRRCAECNDPCSAVDGSQCSFGDARKMSMEQVQFVPPLVDSMIGGYSALEQLIPEVMPHSFPESVISGMAVTEAIPVGSAPY.

The zn(2)-C6 fungal-type DNA-binding region spans 52-81 (CNTCRKLKTRCDLDPRGHACRRCLSLRIDC).

The protein belongs to the prtT family.

Its subcellular location is the nucleus. Its function is as follows. Transcription factor required for protein utilization and degradation. Regulates transcription of major secreted proteases including a serine alkaline protease (alp1) and a metalloprotease (NpI). In Aspergillus oryzae (strain ATCC 42149 / RIB 40) (Yellow koji mold), this protein is Transcriptional activator of proteases prtT (prtT).